The chain runs to 40 residues: Photosystem II reaction center protein J (40 aa).

Residues 10–30 (LWLIGTVAGILVIGLVGIFFY) form a helical membrane-spanning segment.

Belongs to the PsbJ family. In terms of assembly, PSII is composed of 1 copy each of membrane proteins PsbA, PsbB, PsbC, PsbD, PsbE, PsbF, PsbH, PsbI, PsbJ, PsbK, PsbL, PsbM, PsbT, PsbX, PsbY, PsbZ, Psb30/Ycf12, at least 3 peripheral proteins of the oxygen-evolving complex and a large number of cofactors. It forms dimeric complexes.

The protein resides in the plastid. Its subcellular location is the chloroplast thylakoid membrane. Its function is as follows. One of the components of the core complex of photosystem II (PSII). PSII is a light-driven water:plastoquinone oxidoreductase that uses light energy to abstract electrons from H(2)O, generating O(2) and a proton gradient subsequently used for ATP formation. It consists of a core antenna complex that captures photons, and an electron transfer chain that converts photonic excitation into a charge separation. The sequence is that of Photosystem II reaction center protein J from Marchantia polymorpha (Common liverwort).